An 82-amino-acid chain; its full sequence is Envelope small membrane protein (82 aa).

The Virion surface portion of the chain corresponds to 1 to 16; sequence MVDLFFNDTAWYIGQI. The helical transmembrane segment at 17–37 threads the bilayer; it reads LVLVLFCLISLIFVVAFLATI. Residues 38 to 79 are Intravirion-facing; that stretch reads KLCMQLCGFCNFFIISPSAYVYKRGMQLYKSYSEQVIPPTSD.

It belongs to the betacoronaviruses E protein family. As to quaternary structure, homopentamer. Interacts with membrane protein M in the budding compartment of the host cell, which is located between endoplasmic reticulum and the Golgi complex. Interacts with Nucleoprotein.

The protein resides in the host Golgi apparatus membrane. Functionally, plays a central role in virus morphogenesis and assembly. Acts as a viroporin and self-assembles in host membranes forming pentameric protein-lipid pores that allow ion transport. Also plays a role in the induction of apoptosis. The protein is Envelope small membrane protein of Human coronavirus HKU1 (isolate N1) (HCoV-HKU1).